We begin with the raw amino-acid sequence, 285 residues long: MAAKMATMVALVFGLALLLSAAAPAAAQNCGCQDGYCCSQWGYCGTTEAYCGQGCQSGPCWGSGGEAAAGMAGRKAGAGAGVSVESVVTEAFFNGIKNQAPNGCAGKSFYTRQSFLNAARSYSGFANDRTNDDSKREIAAFFAHVTHETGHMCYINEINGANMDYCDKSNKQWPCQPGKKYYGRGPLQISWNFNYGPAGKNIGFDGLRDPDKVAQDPTISFKTALWFWMNNVHQVMSQGFGATIRAINGALECNGKNPGAVNARVNYYKDYCRQFGVSPGGNLYC.

Residues Met-1 to Ala-27 form the signal peptide. In terms of domain architecture, Chitin-binding type-1 spans Gln-28–Gly-62. 7 disulfide bridges follow: Cys-30–Cys-38, Cys-32–Cys-44, Cys-37–Cys-51, Cys-55–Cys-60, Cys-104–Cys-153, Cys-166–Cys-175, and Cys-253–Cys-285. Residue Glu-148 is the Proton donor of the active site.

Belongs to the glycosyl hydrolase 19 family. Chitinase class IV subfamily. As to expression, expressed at low levels in leaves, sheaths and meristems.

It carries out the reaction Random endo-hydrolysis of N-acetyl-beta-D-glucosaminide (1-&gt;4)-beta-linkages in chitin and chitodextrins.. In terms of biological role, hydrolyzes chitin and may function in reproductive organs during embryogenesis and seed maturation. The polypeptide is Chitinase 4 (Cht4) (Oryza sativa subsp. japonica (Rice)).